We begin with the raw amino-acid sequence, 339 residues long: DNA double-strand break repair nuclease NurA (339 aa).

Positions 58 and 133 each coordinate Mn(2+).

Belongs to the NurA family. In terms of assembly, homodimer. Forms a complex with HerA. It depends on Mn(2+) as a cofactor.

With respect to regulation, nuclease activity requires the presence of HerA. Another report shows endo- and exonuclease activity in the absence of HerA; HerA stimulates the exo- but not endonuclease. LhrC-Core (Hel112) inhibits the exonuclease activity of the HerA-NurA complex on ss- and dsDNA, has no effect on the nicking activity of NurA. Endo- and exonuclease activities are inhibited by ATP; ATP may subtract divalent ions from the reaction preventing nuclease activity, HerA can alleviate ATP inhibition. Its function is as follows. Involved in DNA double-strand break (DSB) repair. Probably acts with HerA to stimulate resection of the 5' strand and produce the long 3' single-strand that is required for RadA loading. NurA and HerA together stimulate the end-resection of six nucleotides of a linear DNA substrate. Processes linear double-stranded (ds)DNA probes with 3' or 5' single-stranded overhangs or blunt ends. Has endonuclease activity on single-stranded (ss)DNA and nicking activity on dsDNA without HerA as well as 5'- and 3'-exonuclease activity on ssDNA. Binds ssDNA, dsDNA, forked and bubble DNA equally well. The protein is DNA double-strand break repair nuclease NurA of Saccharolobus solfataricus (strain ATCC 35092 / DSM 1617 / JCM 11322 / P2) (Sulfolobus solfataricus).